The following is a 288-amino-acid chain: 30 kDa spicule matrix protein (288 aa).

A signal peptide spans 1-20 (MRCFVYVLVCVVASVSYSRA). Positions 93-163 (ANMYCGQMHP…YTNWEGMVAP (71 aa)) constitute a C-type lectin domain. N103 carries an N-linked (GlcNAc...) asparagine glycan.

Spines and tube feet.

Its function is as follows. Matrix protein of the sea urchin embryo spicule. The function of the matrix proteins is to direct crystal growth in certain orientations and inhibit growth in others. The chain is 30 kDa spicule matrix protein (SM30) from Hemicentrotus pulcherrimus (Sea urchin).